The chain runs to 31 residues: Maltose/maltodextrin import ATP-binding protein MalK (31 aa).

Belongs to the ABC transporter superfamily. Maltooligosaccharide importer (TC 3.A.1.1.1) family. The complex is composed of two ATP-binding proteins (MalK), two transmembrane proteins (MalG and MalK) and a solute-binding protein (MalE).

The protein localises to the cell inner membrane. The catalysed reaction is D-maltose(out) + ATP + H2O = D-maltose(in) + ADP + phosphate + H(+). Its function is as follows. Part of the ABC transporter complex MalEFGK involved in maltose/maltodextrin import. Responsible for energy coupling to the transport system. The chain is Maltose/maltodextrin import ATP-binding protein MalK from Photorhabdus luminescens (Xenorhabdus luminescens).